A 291-amino-acid chain; its full sequence is Nucleotide-binding protein lin2617 (291 aa).

13-20 (GMSGAGKT) contributes to the ATP binding site. 63–66 (DLRG) provides a ligand contact to GTP.

It belongs to the RapZ-like family.

Displays ATPase and GTPase activities. This chain is Nucleotide-binding protein lin2617, found in Listeria innocua serovar 6a (strain ATCC BAA-680 / CLIP 11262).